The following is a 1047-amino-acid chain: Atrial natriuretic peptide receptor 2 (1047 aa).

A signal peptide spans 1–16; it reads MALPSLLLVVAALAGG. At 17 to 458 the chain is on the extracellular side; it reads VRPPGARNLT…DKTPLSTLAI (442 aa). 2 N-linked (GlcNAc...) asparagine glycosylation sites follow: asparagine 24 and asparagine 35. A disulfide bridge links cysteine 75 with cysteine 101. N-linked (GlcNAc...) asparagine glycosylation is found at asparagine 161, asparagine 195, asparagine 244, asparagine 277, and asparagine 349. The chain crosses the membrane as a helical span at residues 459 to 478; sequence VALGTGITFIMFGVSSFLIF. The Cytoplasmic portion of the chain corresponds to 479–1047; the sequence is RKLMLEKELA…GERKGPAGLL (569 aa). Serine 513 is modified (phosphoserine). The Protein kinase domain occupies 513 to 786; it reads SRLTLSLRGS…PDFGQIKGFI (274 aa). Threonine 516 is subject to Phosphothreonine. Phosphoserine is present on residues serine 518, serine 522, serine 523, and serine 526. Threonine 529 carries the phosphothreonine modification. A Guanylate cyclase domain is found at 861–991; sequence TIYFSDIVGF…DTVNTASRME (131 aa).

It belongs to the adenylyl cyclase class-4/guanylyl cyclase family. In terms of processing, phosphorylated. Phosphorylation of the protein kinase-like domain is required for full activation by CNP. Glycosylated.

The protein resides in the cell membrane. The catalysed reaction is GTP = 3',5'-cyclic GMP + diphosphate. Its function is as follows. Receptor for the C-type natriuretic peptide NPPC/CNP hormone. Has guanylate cyclase activity upon binding of its ligand. May play a role in the regulation of skeletal growth. The chain is Atrial natriuretic peptide receptor 2 (NPR2) from Bos taurus (Bovine).